The following is a 471-amino-acid chain: Alpha-1,3/1,6-mannosyltransferase alg-2 (471 aa).

N-linked (GlcNAc...) asparagine glycans are attached at residues N178 and N279. Residues 446-466 (GMILLVVGAAVAAVAGVISAV) traverse the membrane as a helical segment.

The protein belongs to the glycosyltransferase group 1 family. Glycosyltransferase 4 subfamily.

The protein localises to the endoplasmic reticulum membrane. The enzyme catalyses a beta-D-Man-(1-&gt;4)-beta-D-GlcNAc-(1-&gt;4)-alpha-D-GlcNAc-diphospho-di-trans,poly-cis-dolichol + GDP-alpha-D-mannose = an alpha-D-Man-(1-&gt;3)-beta-D-Man-(1-&gt;4)-beta-D-GlcNAc-(1-&gt;4)-alpha-D-GlcNAc-diphospho-di-trans,poly-cis-dolichol + GDP + H(+). It carries out the reaction an alpha-D-Man-(1-&gt;3)-beta-D-Man-(1-&gt;4)-beta-D-GlcNAc-(1-&gt;4)-alpha-D-GlcNAc-diphospho-di-trans,poly-cis-dolichol + GDP-alpha-D-mannose = an alpha-D-Man-(1-&gt;3)-[alpha-D-Man-(1-&gt;6)]-beta-D-Man-(1-&gt;4)-beta-D-GlcNAc-(1-&gt;4)-alpha-D-GlcNAc-diphospho-di-trans,poly-cis-dolichol + GDP + H(+). The protein operates within protein modification; protein glycosylation. Functionally, mannosylates Man(2)GlcNAc(2)-dolichol diphosphate and Man(1)GlcNAc(2)-dolichol diphosphate to form Man(3)GlcNAc(2)-dolichol diphosphate. This is Alpha-1,3/1,6-mannosyltransferase alg-2 (alg-2) from Neurospora crassa (strain ATCC 24698 / 74-OR23-1A / CBS 708.71 / DSM 1257 / FGSC 987).